The following is a 338-amino-acid chain: tRNA N6-adenosine threonylcarbamoyltransferase (338 aa).

The Fe cation site is built by His-111 and His-115. Residues 134 to 138 (LVSGG), Asp-167, Gly-180, and Asn-272 contribute to the substrate site. Fe cation is bound at residue Asp-300.

Belongs to the KAE1 / TsaD family. Fe(2+) serves as cofactor.

It localises to the cytoplasm. The catalysed reaction is L-threonylcarbamoyladenylate + adenosine(37) in tRNA = N(6)-L-threonylcarbamoyladenosine(37) in tRNA + AMP + H(+). Functionally, required for the formation of a threonylcarbamoyl group on adenosine at position 37 (t(6)A37) in tRNAs that read codons beginning with adenine. Is involved in the transfer of the threonylcarbamoyl moiety of threonylcarbamoyl-AMP (TC-AMP) to the N6 group of A37, together with TsaE and TsaB. TsaD likely plays a direct catalytic role in this reaction. The polypeptide is tRNA N6-adenosine threonylcarbamoyltransferase (Shewanella oneidensis (strain ATCC 700550 / JCM 31522 / CIP 106686 / LMG 19005 / NCIMB 14063 / MR-1)).